Reading from the N-terminus, the 375-residue chain is 23S rRNA (uracil(747)-C(5))-methyltransferase RlmC (375 aa).

[4Fe-4S] cluster-binding residues include cysteine 3, cysteine 11, cysteine 14, and cysteine 87. Residues glutamine 212, phenylalanine 241, glutamate 262, and asparagine 307 each contribute to the S-adenosyl-L-methionine site. Cysteine 334 (nucleophile) is an active-site residue.

Belongs to the class I-like SAM-binding methyltransferase superfamily. RNA M5U methyltransferase family. RlmC subfamily.

The catalysed reaction is uridine(747) in 23S rRNA + S-adenosyl-L-methionine = 5-methyluridine(747) in 23S rRNA + S-adenosyl-L-homocysteine + H(+). Functionally, catalyzes the formation of 5-methyl-uridine at position 747 (m5U747) in 23S rRNA. The protein is 23S rRNA (uracil(747)-C(5))-methyltransferase RlmC of Salmonella typhi.